A 354-amino-acid polypeptide reads, in one-letter code: uncharacterized protein (354 aa).

A compositionally biased stretch (polar residues) spans 309-326 (VNSANSINTANTRSQTGG). The segment at 309–333 (VNSANSINTANTRSQTGGQDEEDFE) is disordered. A coiled-coil region spans residues 326-353 (GQDEEDFEKKYKKYKNKYAKLKNQKTSN).

It is found in the virion. This is an uncharacterized protein from Acanthamoeba polyphaga (Amoeba).